Here is a 175-residue protein sequence, read N- to C-terminus: ATP-dependent protease subunit HslV (175 aa).

Thr2 is a catalytic residue. Positions 156, 159, and 162 each coordinate Na(+).

The protein belongs to the peptidase T1B family. HslV subfamily. A double ring-shaped homohexamer of HslV is capped on each side by a ring-shaped HslU homohexamer. The assembly of the HslU/HslV complex is dependent on binding of ATP.

It is found in the cytoplasm. The catalysed reaction is ATP-dependent cleavage of peptide bonds with broad specificity.. Allosterically activated by HslU binding. Protease subunit of a proteasome-like degradation complex believed to be a general protein degrading machinery. This Rhizobium etli (strain CIAT 652) protein is ATP-dependent protease subunit HslV.